Reading from the N-terminus, the 1020-residue chain is Glycine dehydrogenase (decarboxylating), mitochondrial (1020 aa).

The N-terminal 35 residues, 1 to 35 (MQSCARAWGLRLGRGVGGGRRLAGGSGPCWAPRSR), are a transit peptide targeting the mitochondrion. The tract at residues 21 to 46 (RLAGGSGPCWAPRSRDSSSGGGDSAA) is disordered. Lysine 447, lysine 514, lysine 648, and lysine 664 each carry N6-acetyllysine. Lysine 754 is modified (N6-(pyridoxal phosphate)lysine).

Belongs to the GcvP family. In terms of assembly, homodimer. Interacts with GCSH. The glycine cleavage system is composed of four proteins: P (GLDC), T (GCST), L (DLD) and H (GCSH). The cofactor is pyridoxal 5'-phosphate.

It is found in the mitochondrion. It catalyses the reaction N(6)-[(R)-lipoyl]-L-lysyl-[glycine-cleavage complex H protein] + glycine + H(+) = N(6)-[(R)-S(8)-aminomethyldihydrolipoyl]-L-lysyl-[glycine-cleavage complex H protein] + CO2. Its activity is regulated as follows. Stimulated by lipoic acid. Inhibited in presence of methylamine. In terms of biological role, the glycine cleavage system catalyzes the degradation of glycine. The P protein (GLDC) binds the alpha-amino group of glycine through its pyridoxal phosphate cofactor; CO(2) is released and the remaining methylamine moiety is then transferred to the lipoamide cofactor of the H protein (GCSH). The sequence is that of Glycine dehydrogenase (decarboxylating), mitochondrial from Homo sapiens (Human).